Consider the following 300-residue polypeptide: F-box protein PP2-A15 (300 aa).

In terms of domain architecture, F-box spans 17 to 63 (MGPGLGDIPESCVACVFMYLTPPEICNLAGLNRSFRGAASSDSVWEK).

The polypeptide is F-box protein PP2-A15 (PP2A15) (Arabidopsis thaliana (Mouse-ear cress)).